The following is an 833-amino-acid chain: Glycerol-3-phosphate acyltransferase (833 aa).

The HXXXXD motif motif lies at 310 to 315 (HRSHID).

The protein belongs to the GPAT/DAPAT family.

The protein localises to the cell inner membrane. The enzyme catalyses sn-glycerol 3-phosphate + an acyl-CoA = a 1-acyl-sn-glycero-3-phosphate + CoA. It functions in the pathway phospholipid metabolism; CDP-diacylglycerol biosynthesis; CDP-diacylglycerol from sn-glycerol 3-phosphate: step 1/3. The polypeptide is Glycerol-3-phosphate acyltransferase (Pseudomonas syringae pv. tomato (strain ATCC BAA-871 / DC3000)).